Here is a 533-residue protein sequence, read N- to C-terminus: DELLA protein 2 (533 aa).

A compositionally biased stretch (basic and acidic residues) spans 1 to 12 (MKREHKLEHEDM). Positions 1–24 (MKREHKLEHEDMSSGSGKSGVCWE) are disordered. The DELLA motif motif lies at 31–35 (DELLA). Residues 157–522 (VETQEKGIRL…RPLIATSAWK (366 aa)) form the GRAS domain. Positions 164–218 (IRLVHSLMACAEAVEQNNLKMAEALVKQIGYLAVSQEGAMRKVATYFAEGLARRI) are leucine repeat I (LRI). A required for possible homodimerization region spans residues 166–203 (LVHSLMACAEAVEQNNLKMAEALVKQIGYLAVSQEGAM). Residues 171–175 (MACAE) carry the LxCxE motif; degenerate motif. The VHIID stretch occupies residues 232–297 (QIHFYETCPN…GGPPAFRLTG (66 aa)). The short motif at 263–267 (VHVID) is the VHIID element. The interval 311–343 (QVGWRLAQFAQTIHVQFEYRGFVANSLADLDAS) is leucine repeat II (LRII). The PFYRE stretch occupies residues 355–443 (VAVNSVFELH…EVYLGKQICN (89 aa)). The LXXLL motif; degenerate motif lies at 363–367 (LHKLN). The segment at 446-522 (ACEGTDRVER…RPLIATSAWK (77 aa)) is SAW.

The protein belongs to the GRAS family. DELLA subfamily. As to quaternary structure, may be a homodimer. Post-translationally, ubiquitinated. Upon GA application it is ubiquitinated, leading to its subsequent degradation.

It localises to the nucleus. Its function is as follows. Probable transcriptional regulator that acts as a repressor of the gibberellin (GA) signaling pathway. Probably acts by participating in large multiprotein complexes that repress transcription of GA-inducible genes. Upon GA application, it is degraded by the proteasome, allowing the GA signaling pathway. Together with DELLA1, required to enable arbuscule development during arbuscular mycorrhizal (AM) symbiosis with AM fungi (e.g. Glomus versiforme) via the regulation of RAM1 which, in turn, regulates various AM genes (e.g. NSP1, NSP2, PT4, LEC5, RAM2, EXO70I, STR and RAD1). This Medicago truncatula (Barrel medic) protein is DELLA protein 2.